Here is a 169-residue protein sequence, read N- to C-terminus: Der GTPase-activating protein YihI (169 aa).

Disordered stretches follow at residues 1–99 (MKPS…QAEL) and 146–169 (SYDD…LRGN). Basic residues predominate over residues 10–19 (SKGHAKARRK). The segment covering 20–30 (TREELDQEARD) has biased composition (basic and acidic residues). Basic residues predominate over residues 31–40 (RKRQKKRRGH). Positions 49-58 (GNTTSGSKGQ) are enriched in polar residues. The span at 147–159 (YDDDEEEEEDEKQ) shows a compositional bias: acidic residues. Residues 160 to 169 (EDMMRLLRGN) are compositionally biased toward basic and acidic residues.

The protein belongs to the YihI family. As to quaternary structure, interacts with Der.

Functionally, a GTPase-activating protein (GAP) that modifies Der/EngA GTPase function. May play a role in ribosome biogenesis. The protein is Der GTPase-activating protein YihI of Escherichia coli O81 (strain ED1a).